A 141-amino-acid chain; its full sequence is HTH-type transcriptional regulator MntR (141 aa).

Residues M1–T63 form the HTH dtxR-type domain. Mn(2+)-binding residues include D8, E11, H77, E99, E102, and H103.

The protein belongs to the DtxR/MntR family. Homodimer.

The protein localises to the cytoplasm. With respect to regulation, DNA binding is strongly activated by Mn(2+). Central regulator of manganese homeostasis. The sequence is that of HTH-type transcriptional regulator MntR from Geobacillus thermodenitrificans (strain NG80-2).